Reading from the N-terminus, the 267-residue chain is 5'-nucleotidase SurE (267 aa).

D9, D10, S40, and N97 together coordinate a divalent metal cation.

This sequence belongs to the SurE nucleotidase family. Requires a divalent metal cation as cofactor.

It localises to the cytoplasm. The catalysed reaction is a ribonucleoside 5'-phosphate + H2O = a ribonucleoside + phosphate. Its function is as follows. Nucleotidase that shows phosphatase activity on nucleoside 5'-monophosphates. The sequence is that of 5'-nucleotidase SurE from Helicobacter pylori (strain HPAG1).